Here is a 784-residue protein sequence, read N- to C-terminus: Cas scaffolding protein family member 4 (784 aa).

In terms of domain architecture, SH3 spans 11 to 73; the sequence is PKALLARALY…PANRLQILEE (63 aa). Residues serine 197, serine 246, serine 302, serine 373, and serine 387 each carry the phosphoserine modification. Positions 343 to 376 are disordered; sequence TPNIYDVPRAMPDVPQAGKELGKAGGPSENSVDH. A coiled-coil region spans residues 466 to 536; that stretch reads RDSLEANIDA…LLETKERLES (71 aa). The segment at 614 to 635 is disordered; the sequence is KEGESYQRKAPFQKQRASEQPP.

Belongs to the CAS family. In terms of assembly, interacts (via SH3 domain) with PTK2/FAK1 (via C-terminus). In terms of processing, phosphorylated on tyrosines by SRC.

Its subcellular location is the cytoplasm. It is found in the cytoskeleton. It localises to the cell junction. The protein resides in the focal adhesion. In terms of biological role, docking protein that plays a role in tyrosine kinase-based signaling related to cell adhesion and cell spreading. Regulates PTK2/FAK1 activity, focal adhesion integrity, and cell spreading. This chain is Cas scaffolding protein family member 4, found in Sus scrofa (Pig).